Here is a 413-residue protein sequence, read N- to C-terminus: Tyrosine--tRNA ligase (413 aa).

Residues 59-68 (PTAPDIHLGH) carry the 'HIGH' region motif. The short motif at 243-247 (KMSKS) is the 'KMSKS' region element. Residue Lys-246 participates in ATP binding. Residues 351–411 (LAIGQLLKQA…GKRRFARVTL (61 aa)) enclose the S4 RNA-binding domain.

The protein belongs to the class-I aminoacyl-tRNA synthetase family. TyrS type 2 subfamily. In terms of assembly, homodimer.

The protein localises to the cytoplasm. The catalysed reaction is tRNA(Tyr) + L-tyrosine + ATP = L-tyrosyl-tRNA(Tyr) + AMP + diphosphate + H(+). In terms of biological role, catalyzes the attachment of tyrosine to tRNA(Tyr) in a two-step reaction: tyrosine is first activated by ATP to form Tyr-AMP and then transferred to the acceptor end of tRNA(Tyr). This Burkholderia pseudomallei (strain K96243) protein is Tyrosine--tRNA ligase.